Consider the following 259-residue polypeptide: Deoxyribose-phosphate aldolase (259 aa).

Asp-102 (proton donor/acceptor) is an active-site residue. Lys-167 functions as the Schiff-base intermediate with acetaldehyde in the catalytic mechanism. The Proton donor/acceptor role is filled by Lys-201.

The protein belongs to the DeoC/FbaB aldolase family. DeoC type 2 subfamily.

It is found in the cytoplasm. It carries out the reaction 2-deoxy-D-ribose 5-phosphate = D-glyceraldehyde 3-phosphate + acetaldehyde. Its pathway is carbohydrate degradation; 2-deoxy-D-ribose 1-phosphate degradation; D-glyceraldehyde 3-phosphate and acetaldehyde from 2-deoxy-alpha-D-ribose 1-phosphate: step 2/2. Functionally, catalyzes a reversible aldol reaction between acetaldehyde and D-glyceraldehyde 3-phosphate to generate 2-deoxy-D-ribose 5-phosphate. This chain is Deoxyribose-phosphate aldolase, found in Photorhabdus laumondii subsp. laumondii (strain DSM 15139 / CIP 105565 / TT01) (Photorhabdus luminescens subsp. laumondii).